The sequence spans 135 residues: Transcription antitermination protein NusB (135 aa).

The protein belongs to the NusB family.

Functionally, involved in transcription antitermination. Required for transcription of ribosomal RNA (rRNA) genes. Binds specifically to the boxA antiterminator sequence of the ribosomal RNA (rrn) operons. In Nocardioides sp. (strain ATCC BAA-499 / JS614), this protein is Transcription antitermination protein NusB.